Here is a 725-residue protein sequence, read N- to C-terminus: LPS-assembly protein LptD (725 aa).

The N-terminal stretch at 1–25 (MSLLSKLHLILYICLLLLPLRFVNA) is a signal peptide.

It belongs to the LptD family. In terms of assembly, component of the lipopolysaccharide transport and assembly complex. Interacts with LptE and LptA.

It is found in the cell outer membrane. Functionally, together with LptE, is involved in the assembly of lipopolysaccharide (LPS) at the surface of the outer membrane. The chain is LPS-assembly protein LptD from Nitrosomonas eutropha (strain DSM 101675 / C91 / Nm57).